The following is a 1157-amino-acid chain: ATP-dependent helicase/deoxyribonuclease subunit B (1157 aa).

One can recognise a UvrD-like helicase ATP-binding domain in the interval Met-1 to Lys-277. Gly-8–Thr-15 is an ATP binding site. In terms of domain architecture, UvrD-like helicase C-terminal spans Glu-272–Asp-578. [4Fe-4S] cluster contacts are provided by Cys-794, Cys-1115, Cys-1118, and Cys-1124.

Belongs to the helicase family. AddB/RexB type 1 subfamily. As to quaternary structure, heterodimer of AddA and AddB. Mg(2+) serves as cofactor. It depends on [4Fe-4S] cluster as a cofactor.

In terms of biological role, the heterodimer acts as both an ATP-dependent DNA helicase and an ATP-dependent, dual-direction single-stranded exonuclease. Recognizes the chi site generating a DNA molecule suitable for the initiation of homologous recombination. The AddB subunit has 5' -&gt; 3' nuclease activity but not helicase activity. This is ATP-dependent helicase/deoxyribonuclease subunit B from Listeria welshimeri serovar 6b (strain ATCC 35897 / DSM 20650 / CCUG 15529 / CIP 8149 / NCTC 11857 / SLCC 5334 / V8).